A 379-amino-acid chain; its full sequence is Carbamoyl phosphate synthase small chain (379 aa).

Residues 1-187 (MNFTPALLAL…GSGHAPAPAS (187 aa)) are CPSase. L-glutamine-binding residues include Ser48, Gly239, and Gly241. The Glutamine amidotransferase type-1 domain maps to 191–378 (KVVAYDFGVK…IELMKPQGVR (188 aa)). Residue Cys267 is the Nucleophile of the active site. Positions 268, 271, 309, 311, and 312 each coordinate L-glutamine. Catalysis depends on residues His351 and Glu353.

This sequence belongs to the CarA family. In terms of assembly, composed of two chains; the small (or glutamine) chain promotes the hydrolysis of glutamine to ammonia, which is used by the large (or ammonia) chain to synthesize carbamoyl phosphate. Tetramer of heterodimers (alpha,beta)4.

It catalyses the reaction hydrogencarbonate + L-glutamine + 2 ATP + H2O = carbamoyl phosphate + L-glutamate + 2 ADP + phosphate + 2 H(+). The catalysed reaction is L-glutamine + H2O = L-glutamate + NH4(+). It participates in amino-acid biosynthesis; L-arginine biosynthesis; carbamoyl phosphate from bicarbonate: step 1/1. Its pathway is pyrimidine metabolism; UMP biosynthesis via de novo pathway; (S)-dihydroorotate from bicarbonate: step 1/3. Its function is as follows. Small subunit of the glutamine-dependent carbamoyl phosphate synthetase (CPSase). CPSase catalyzes the formation of carbamoyl phosphate from the ammonia moiety of glutamine, carbonate, and phosphate donated by ATP, constituting the first step of 2 biosynthetic pathways, one leading to arginine and/or urea and the other to pyrimidine nucleotides. The small subunit (glutamine amidotransferase) binds and cleaves glutamine to supply the large subunit with the substrate ammonia. The protein is Carbamoyl phosphate synthase small chain of Thioalkalivibrio sulfidiphilus (strain HL-EbGR7).